The sequence spans 741 residues: Pentatricopeptide repeat-containing protein At3g58590 (741 aa).

PPR repeat units follow at residues 48–78 (PVYVCNNIISLYEKLGEVSLAGKVFDQMPER), 79–113 (NKVSFNTIIKGYSKYGDVDKAWGVFSEMRYFGYLP), 114–146 (NQSTVSGLLSCASLDVRAGTQLHGLSLKYGLFM), 148–178 (DAFVGTCLLCLYGRLDLLEMAEQVFEDMPFK), 179–213 (SLETWNHMMSLLGHRGFLKECMFFFRELVRMGASL), 214–248 (TESSFLGVLKGVSCVKDLDISKQLHCSATKKGLDC), 249–279 (EISVVNSLISAYGKCGNTHMAERMFQDAGSW), 280–314 (DIVSWNAIICATAKSENPLKALKLFVSMPEHGFSP), 315–349 (NQGTYVSVLGVSSLVQLLSCGRQIHGMLIKNGCET), 350–380 (GIVLGNALIDFYAKCGNLEDSRLCFDYIRDK), 381–414 (NIVCWNALLSGYANKDGPICLSLFLQMLQMGFRP), 415–445 (TEYTFSTALKSCCVTELQQLHSVIVRMGYED), 446–481 (NDYVLSSLMRSYAKNQLMNDALLLLDWASGPTSVVP), 483–508 (NIVAGIYSRRGQYHESVKLISTLEQP), 509–543 (DTVSWNIAIAACSRSDYHEEVIELFKHMLQSNIRP), 544–578 (DKYTFVSILSLCSKLCDLTLGSSIHGLITKTDFSC), 580–610 (DTFVCNVLIDMYGKCGSIRSVMKVFEETREK), 611–645 (NLITWTALISCLGIHGYGQEALEKFKETLSLGFKP), 646–680 (DRVSFISILTACRHGGMVKEGMGLFQKMKDYGVEP), and 681–715 (EMDHYRCAVDLLARNGYLKEAEHLIREMPFPADAP).

The protein belongs to the PPR family. P subfamily.

This is Pentatricopeptide repeat-containing protein At3g58590 from Arabidopsis thaliana (Mouse-ear cress).